The sequence spans 122 residues: MGNLIKELQEEQLRKEILTDFCVGDTIRVATKIVDGGKERTQTFQGTVMARKGGGAGEVISLHRVAYGEGMEKSFLLHSPKIVGIEVVKRGKVSRARLYYLKGKTGKAAKVKEYIGPRSAKK.

The protein belongs to the bacterial ribosomal protein bL19 family.

Functionally, this protein is located at the 30S-50S ribosomal subunit interface and may play a role in the structure and function of the aminoacyl-tRNA binding site. This is Large ribosomal subunit protein bL19 from Chlamydia abortus (strain DSM 27085 / S26/3) (Chlamydophila abortus).